The sequence spans 119 residues: UPF0344 protein lp_1373 (119 aa).

A run of 4 helical transmembrane segments spans residues 1-21 (MYLLGHIIGWLWLMLTVAIGL), 32-52 (FLILSRIGYLLIIITGVALAI), 60-80 (WLTLLKVILGLGTIGLIEVAF), and 92-112 (LVTLLVCGTLLTIICGIGLHW).

It belongs to the UPF0344 family.

Its subcellular location is the cell membrane. In Lactiplantibacillus plantarum (strain ATCC BAA-793 / NCIMB 8826 / WCFS1) (Lactobacillus plantarum), this protein is UPF0344 protein lp_1373.